Here is a 932-residue protein sequence, read N- to C-terminus: Protocadherin gamma-A3 (932 aa).

An N-terminal signal peptide occupies residues 1–29 (MTNCLSFRNGRGLALLCALLGTLCETGSG). Cadherin domains lie at 30 to 133 (QIRY…APNF), 134 to 242 (PTEE…PPMF), 243 to 347 (TQPE…APEI), 348 to 452 (TITS…PPTF), 453 to 562 (PHLS…APEI), and 570 to 682 (DGST…EPSA). The Extracellular segment spans residues 30–692 (QIRYSVSEEL…KPNDSDLTLY (663 aa)). Asparagine 265, asparagine 419, and asparagine 545 each carry an N-linked (GlcNAc...) asparagine glycan. A glycan (N-linked (GlcNAc...) asparagine) is linked at asparagine 685. A helical transmembrane segment spans residues 693-713 (LVVAVAAVSCVFLALVIVLLA). Over 714-932 (HRLRRWHKSR…KKKSGKKEKK (219 aa)) the chain is Cytoplasmic. Disordered regions lie at residues 806 to 841 (LLQQAPPNTDWRFSQAQRPGTSGSQNGDDTGTWPNN) and 902 to 932 (ATLTNAAGKRDGKAPAGGNGNKKKSGKKEKK). Positions 922 to 932 (NKKKSGKKEKK) are enriched in basic residues.

Its subcellular location is the cell membrane. In terms of biological role, potential calcium-dependent cell-adhesion protein. May be involved in the establishment and maintenance of specific neuronal connections in the brain. This chain is Protocadherin gamma-A3 (PCDHGA3), found in Pan troglodytes (Chimpanzee).